The following is a 335-amino-acid chain: Pro-cathepsin H (335 aa).

Positions 1-22 (MWAVLPLLCAGAWLLGAPACGA) are cleaved as a signal peptide. The propeptide at 23-97 (AELAANSLEK…DELKRKYLWS (75 aa)) is activation peptide. N72 and N101 each carry an N-linked (GlcNAc...) asparagine glycan. Cystine bridges form between C102–C327, C138–C181, C172–C214, and C272–C322. A propeptide spanning residues 106 to 115 (KSNYLRGTGP) is cleaved from the precursor. C141 is a catalytic residue. A glycan (N-linked (GlcNAc...) asparagine) is linked at N230. Active-site residues include H281 and N301.

Belongs to the peptidase C1 family. In terms of assembly, composed of a mini chain and a large chain. The large chain may be split into heavy and light chain. All chains are held together by disulfide bonds.

Its subcellular location is the lysosome. The catalysed reaction is Hydrolysis of proteins, acting as an aminopeptidase (notably, cleaving Arg-|-Xaa bonds) as well as an endopeptidase.. Functionally, important for the overall degradation of proteins in lysosomes. This Bos taurus (Bovine) protein is Pro-cathepsin H (CTSH).